Here is a 393-residue protein sequence, read N- to C-terminus: Glycocyamine kinase (393 aa).

A Phosphagen kinase N-terminal domain is found at Arg-7 to His-94. The Phosphagen kinase C-terminal domain maps to Tyr-120 to Leu-362. Residues Ser-123–Arg-127, His-186, Arg-231, Arg-287–His-291, Arg-315–Glu-320, and Asp-330 contribute to the ATP site. Residues Pro-367–Leu-393 form a disordered region. Residues Ser-377–Leu-393 show a composition bias toward low complexity.

It belongs to the ATP:guanido phosphotransferase family. As to quaternary structure, monomer.

The catalysed reaction is guanidinoacetate + ATP = phosphoguanidinoacetate + ADP + H(+). The protein is Glycocyamine kinase of Hediste diversicolor (Sandworm).